The primary structure comprises 357 residues: DNA replication and repair protein RecF (357 aa).

30–37 is an ATP binding site; the sequence is GANGSGKT.

It belongs to the RecF family.

Its subcellular location is the cytoplasm. The RecF protein is involved in DNA metabolism; it is required for DNA replication and normal SOS inducibility. RecF binds preferentially to single-stranded, linear DNA. It also seems to bind ATP. In Salmonella schwarzengrund (strain CVM19633), this protein is DNA replication and repair protein RecF.